The chain runs to 65 residues: Alpha-conotoxine-like Am1.5 (65 aa).

An N-terminal signal peptide occupies residues 1-21; that stretch reads MGMRMMFTVFLLVVLATTVVS. A propeptide spanning residues 22–46 is cleaved from the precursor; the sequence is FMSGRAFRDRNAAAKVSDLIALKAR. A 4-carboxyglutamate modification is found at E49. The segment at 52-54 is ser-Xaa-Pro motif, crucial for potent interaction with nAChR; that stretch reads SHP. P54 and P61 each carry 4-hydroxyproline. E62 carries the post-translational modification 4-carboxyglutamate.

It belongs to the conotoxin A superfamily. Contains 2 disulfide bonds. As to expression, expressed by the venom duct.

The protein resides in the secreted. Functionally, alpha-conotoxins act on postsynaptic membranes, they bind to the nicotinic acetylcholine receptors (nAChR) and thus inhibit them. In Conus amadis (Amadis cone), this protein is Alpha-conotoxine-like Am1.5.